A 556-amino-acid chain; its full sequence is Endonuclease/exonuclease/phosphatase family domain-containing protein 1 (556 aa).

In terms of domain architecture, HhH spans 39–68 (ERLNINTATEEELMTLPGVTRQVAQNIVEY).

The polypeptide is Endonuclease/exonuclease/phosphatase family domain-containing protein 1 (eepd1) (Xenopus laevis (African clawed frog)).